A 134-amino-acid polypeptide reads, in one-letter code: Putative membrane protein insertion efficiency factor (134 aa).

The protein belongs to the UPF0161 family.

The protein localises to the cell inner membrane. In terms of biological role, could be involved in insertion of integral membrane proteins into the membrane. This is Putative membrane protein insertion efficiency factor from Rhizobium etli (strain ATCC 51251 / DSM 11541 / JCM 21823 / NBRC 15573 / CFN 42).